Here is a 133-residue protein sequence, read N- to C-terminus: P2Y purinoceptor 2 (133 aa).

Over 1–26 (ISVHRCLGVLRPLHSLRWGRARYARR) the chain is Cytoplasmic. The chain crosses the membrane as a helical span at residues 27 to 47 (VAFAVWVLVLYCQAPVLYFVT). Residues 48-74 (TSTRSSRIICHDTSARELFSHFVAYSS) lie on the Extracellular side of the membrane. A helical membrane pass occupies residues 75–95 (VMLSLLFAAPFAVILVCYVLM). The Cytoplasmic segment spans residues 96 to 116 (ARRLLKPAYGTSGGLPRAKRK). A helical transmembrane segment spans residues 117–133 (SVRTIAIVLTVFVLCFL).

Belongs to the G-protein coupled receptor 1 family.

Its subcellular location is the cell membrane. Functionally, receptor for ATP and UTP coupled to G-proteins that activate a phosphatidylinositol-calcium second messenger system. This is P2Y purinoceptor 2 (P2RY2) from Bos taurus (Bovine).